The following is a 688-amino-acid chain: Coiled-coil domain-containing protein 157 (688 aa).

A compositionally biased stretch (polar residues) spans 143–153 (ANQGETLTSKP). 5 disordered regions span residues 143–162 (ANQG…PAGS), 168–189 (AQLV…ERDS), 322–341 (QAAR…QWER), 366–385 (QQRE…QAEA), and 592–688 (QGAE…ERPT). Positions 288–572 (KLVGLLRAQL…LSKIREVAQQ (285 aa)) form a coiled coil. Polar residues predominate over residues 369 to 382 (ESTQAVESKAQQLQ). The span at 671–680 (SPSSGRASPA) shows a compositional bias: low complexity.

This chain is Coiled-coil domain-containing protein 157 (CCDC157), found in Bos taurus (Bovine).